A 499-amino-acid polypeptide reads, in one-letter code: Probable cytosol aminopeptidase (499 aa).

Residues Lys-268 and Asp-273 each coordinate Mn(2+). Lys-280 is a catalytic residue. Asp-291, Asp-350, and Glu-352 together coordinate Mn(2+). Arg-354 is a catalytic residue.

Belongs to the peptidase M17 family. Requires Mn(2+) as cofactor.

It localises to the cytoplasm. It carries out the reaction Release of an N-terminal amino acid, Xaa-|-Yaa-, in which Xaa is preferably Leu, but may be other amino acids including Pro although not Arg or Lys, and Yaa may be Pro. Amino acid amides and methyl esters are also readily hydrolyzed, but rates on arylamides are exceedingly low.. It catalyses the reaction Release of an N-terminal amino acid, preferentially leucine, but not glutamic or aspartic acids.. Its function is as follows. Presumably involved in the processing and regular turnover of intracellular proteins. Catalyzes the removal of unsubstituted N-terminal amino acids from various peptides. This chain is Probable cytosol aminopeptidase, found in Halorhodospira halophila (strain DSM 244 / SL1) (Ectothiorhodospira halophila (strain DSM 244 / SL1)).